A 639-amino-acid polypeptide reads, in one-letter code: Chaperone protein DnaK (639 aa).

Thr198 carries the post-translational modification Phosphothreonine; by autocatalysis. The tract at residues 597–639 (AYSAGQSAEGAPHAAGAEASAQSRTDDGVVDADFEEVDEKKGH) is disordered. A compositionally biased stretch (low complexity) spans 603 to 617 (SAEGAPHAAGAEASA). The span at 624-633 (GVVDADFEEV) shows a compositional bias: acidic residues.

It belongs to the heat shock protein 70 family.

Functionally, acts as a chaperone. This Rhodospirillum rubrum (strain ATCC 11170 / ATH 1.1.1 / DSM 467 / LMG 4362 / NCIMB 8255 / S1) protein is Chaperone protein DnaK.